A 546-amino-acid polypeptide reads, in one-letter code: Probable protein kinase UbiB (546 aa).

A Protein kinase domain is found at 124–502 (DFEIKPLASA…HVRQGQSRYF (379 aa)). Residues 130-138 (LASASIAQV) and K153 each bind ATP. Catalysis depends on D288, which acts as the Proton acceptor. 2 consecutive transmembrane segments (helical) span residues 501–521 (YFLGIGATLVLSGTFLLVSRP) and 522–542 (EWGLMPGWLMAGGLIAWFVGW).

It belongs to the ABC1 family. UbiB subfamily.

It is found in the cell inner membrane. The protein operates within cofactor biosynthesis; ubiquinone biosynthesis [regulation]. Its function is as follows. Is probably a protein kinase regulator of UbiI activity which is involved in aerobic coenzyme Q (ubiquinone) biosynthesis. In Shigella boydii serotype 18 (strain CDC 3083-94 / BS512), this protein is Probable protein kinase UbiB.